Reading from the N-terminus, the 35-residue chain is Apolipophorin-3 (35 aa).

In terms of assembly, equilibrium between a soluble monomer and a bound lipoprotein form. Apolipophorin-3 associates with lipophorin during lipid loading until each particle contains 9 or 14 molecules of apolipophorin-3. As to expression, hemolymph.

It localises to the secreted. Its function is as follows. Assists in the loading of diacylglycerol, generated from triacylglycerol stores in the fat body through the action of adipokinetic hormone, into lipophorin, the hemolymph lipoprotein. It increases the lipid carrying capacity of lipophorin by covering the expanding hydrophobic surface resulting from diacylglycerol uptake. It thus plays a critical role in the transport of lipids during flight in several species of insects. Has hemagglutinating activity towards rabbit erythrocytes. In Heliothis virescens (Tobacco budworm moth), this protein is Apolipophorin-3.